We begin with the raw amino-acid sequence, 299 residues long: Apolipoprotein E (299 aa).

An N-terminal signal peptide occupies residues 1–18; it reads MKVLWAVLVVTLLAGCRA. A run of 7 repeats spans residues 74 to 95, 96 to 117, 118 to 139, 140 to 161, 162 to 183, 184 to 205, and 224 to 245. The interval 74–245 is 8 X 22 AA approximate tandem repeats; that stretch reads LLMEDTMKEV…RLDVVREQME (172 aa). At Met137 the chain carries Methionine sulfoxide. Residue Ser141 is modified to Phosphoserine. Residues 152-162 form an LDL and other lipoprotein receptors binding region; that stretch reads HLRKMRKRLLR. 156–159 is a binding site for heparin; it reads MRKR. A lipid-binding and lipoprotein association region spans residues 204–273; it reads SALTSQPLRE…GWFEPMVEDM (70 aa). Residue 219–226 coordinates heparin; that stretch reads GERLRGRL. Residues 261-273 are specificity for association with VLDL; the sequence is RLKGWFEPMVEDM.

Belongs to the apolipoprotein A1/A4/E family. Homotetramer. May interact with ABCA1; functionally associated with ABCA1 in the biogenesis of HDLs. May interact with APP/A4 amyloid-beta peptide; the interaction is extremely stable in vitro but its physiological significance is unclear. May interact with MAPT. May interact with MAP2. In the cerebrospinal fluid, interacts with secreted SORL1. Interacts with PMEL; this allows the loading of PMEL luminal fragment on ILVs to induce fibril nucleation. In terms of processing, APOE exists as multiple glycosylated and sialylated glycoforms within cells and in plasma. The extent of glycosylation and sialylation are tissue and context specific. Glycated in plasma VLDL. Post-translationally, phosphorylated by FAM20C in the extracellular medium.

The protein resides in the secreted. The protein localises to the extracellular space. Its subcellular location is the extracellular matrix. It localises to the extracellular vesicle. It is found in the endosome. The protein resides in the multivesicular body. Functionally, APOE is an apolipoprotein, a protein associating with lipid particles, that mainly functions in lipoprotein-mediated lipid transport between organs via the plasma and interstitial fluids. APOE is a core component of plasma lipoproteins and is involved in their production, conversion and clearance. Apolipoproteins are amphipathic molecules that interact both with lipids of the lipoprotein particle core and the aqueous environment of the plasma. As such, APOE associates with chylomicrons, chylomicron remnants, very low density lipoproteins (VLDL) and intermediate density lipoproteins (IDL) but shows a preferential binding to high-density lipoproteins (HDL). It also binds a wide range of cellular receptors including the LDL receptor/LDLR, the LDL receptor-related proteins LRP1, LRP2 and LRP8 and the very low-density lipoprotein receptor/VLDLR that mediate the cellular uptake of the APOE-containing lipoprotein particles. Finally, APOE also has a heparin-binding activity and binds heparan-sulfate proteoglycans on the surface of cells, a property that supports the capture and the receptor-mediated uptake of APOE-containing lipoproteins by cells. A main function of APOE is to mediate lipoprotein clearance through the uptake of chylomicrons, VLDLs, and HDLs by hepatocytes. APOE is also involved in the biosynthesis by the liver of VLDLs as well as their uptake by peripheral tissues ensuring the delivery of triglycerides and energy storage in muscle, heart and adipose tissues. By participating in the lipoprotein-mediated distribution of lipids among tissues, APOE plays a critical role in plasma and tissues lipid homeostasis. APOE is also involved in two steps of reverse cholesterol transport, the HDLs-mediated transport of cholesterol from peripheral tissues to the liver, and thereby plays an important role in cholesterol homeostasis. First, it is functionally associated with ABCA1 in the biogenesis of HDLs in tissues. Second, it is enriched in circulating HDLs and mediates their uptake by hepatocytes. APOE also plays an important role in lipid transport in the central nervous system, regulating neuron survival and sprouting. In Erethizon dorsatum (North American porcupine), this protein is Apolipoprotein E (APOE).